The primary structure comprises 245 residues: Phosducin (245 aa).

Acidic residues predominate over residues 1–14 (MEEAKSQSLEEDFE). The segment at 1–68 (MEEAKSQSLE…RDNKDSKERF (68 aa)) is disordered. A Phosducin domain is found at 1 to 241 (MEEAKSQSLE…THALDQTNME (241 aa)). The segment covering 59–68 (RDNKDSKERF) has biased composition (basic and acidic residues). S73 is modified (phosphoserine; by PKA). The tract at residues 111–245 (YGFVYELETG…DQTNMEEDIE (135 aa)) is thioredoxin fold.

The protein belongs to the phosducin family. As to quaternary structure, interacts with CRX. Forms a complex with the beta and gamma subunits of the GTP-binding protein, transducin. Post-translationally, light-induced changes in cyclic nucleotide levels modulate the phosphorylation of this protein by cAMP kinase.

It localises to the cytoplasm. The protein localises to the cytosol. It is found in the nucleus. Its subcellular location is the cell projection. The protein resides in the cilium. It localises to the photoreceptor outer segment. The protein localises to the photoreceptor inner segment. Functionally, inhibits the transcriptional activation activity of the cone-rod homeobox CRX. May participate in the regulation of visual phototransduction or in the integration of photoreceptor metabolism. This Felis catus (Cat) protein is Phosducin (PDC).